Reading from the N-terminus, the 136-residue chain is IIYPGTLWCGNGNIANGTNELGLWKETDACCRTHDMCPDIIEAHGSKHGLTNPADYTRLNCECDEEFRHCLHNSGDAVSAAFVGRTYFTILGTQCFRLDYPIVKCKVKSTILRECKEYEFDTNAPQKYQWFDVLSY.

Ca(2+) is bound by residues Trp8, Gly10, and Gly12. 5 disulfides stabilise this stretch: Cys9–Cys31, Cys30–Cys70, Cys37–Cys63, Cys61–Cys95, and Cys105–Cys115. N-linked (GlcNAc...) asparagine glycosylation occurs at Asn16. Residue His34 is part of the active site. A Ca(2+)-binding site is contributed by Asp35. Asp64 is an active-site residue.

The protein belongs to the phospholipase A2 family. Requires Ca(2+) as cofactor. In terms of tissue distribution, expressed by the venom gland.

The protein localises to the secreted. The enzyme catalyses a 1,2-diacyl-sn-glycero-3-phosphocholine + H2O = a 1-acyl-sn-glycero-3-phosphocholine + a fatty acid + H(+). PLA2 catalyzes the calcium-dependent hydrolysis of the 2-acyl groups in 3-sn-phosphoglycerides. The protein is Phospholipase A2 of Bombus pensylvanicus (American bumblebee).